The following is a 543-amino-acid chain: Chaperonin GroEL 2 (543 aa).

Residues 29–32, 86–90, Gly413, and Asp495 contribute to the ATP site; these read TLGP and DGTTT. Positions 524–543 are disordered; that stretch reads KPEPKENAPTGAGMGGDFDY.

Belongs to the chaperonin (HSP60) family. In terms of assembly, forms a cylinder of 14 subunits composed of two heptameric rings stacked back-to-back. Interacts with the co-chaperonin GroES.

It localises to the cytoplasm. The catalysed reaction is ATP + H2O + a folded polypeptide = ADP + phosphate + an unfolded polypeptide.. Its function is as follows. Together with its co-chaperonin GroES, plays an essential role in assisting protein folding. The GroEL-GroES system forms a nano-cage that allows encapsulation of the non-native substrate proteins and provides a physical environment optimized to promote and accelerate protein folding. In Acaryochloris marina (strain MBIC 11017), this protein is Chaperonin GroEL 2.